The chain runs to 246 residues: MIVIPAIDLKNGHCVRLRQGRMDDETIFDADPVAVAGRWVEAGAERLHLVDLDGAVRGEPAHEQTIHAIARAYPDTPLQIGGGIRSRETALRYLEAGVGYVIVGTRAVREPAFVEELCREIPGRVCVGLDARGGYVATDGWEQTSEVAAVDLARRFEDAGVAALIFTDIGRDGMMQGCNVEATRELARAVSIPVIASGGVSSLEDVRSLAGSPEGIAGAIVGRAIYDGGLDLATAIRTAQEVGDDR.

Asp-8 acts as the Proton acceptor in catalysis. The active-site Proton donor is the Asp-130.

It belongs to the HisA/HisF family.

It localises to the cytoplasm. The catalysed reaction is 1-(5-phospho-beta-D-ribosyl)-5-[(5-phospho-beta-D-ribosylamino)methylideneamino]imidazole-4-carboxamide = 5-[(5-phospho-1-deoxy-D-ribulos-1-ylimino)methylamino]-1-(5-phospho-beta-D-ribosyl)imidazole-4-carboxamide. It functions in the pathway amino-acid biosynthesis; L-histidine biosynthesis; L-histidine from 5-phospho-alpha-D-ribose 1-diphosphate: step 4/9. In Halorhodospira halophila (strain DSM 244 / SL1) (Ectothiorhodospira halophila (strain DSM 244 / SL1)), this protein is 1-(5-phosphoribosyl)-5-[(5-phosphoribosylamino)methylideneamino] imidazole-4-carboxamide isomerase.